Here is a 111-residue protein sequence, read N- to C-terminus: MAVKIRLARGGAKKRPFYRVVVANATAPRDGDFLEKVGTYDPMLALDNSERVVLKKDRIEYWLGTGAKPTERVAKFIEQAGVTLPEKVKKEMEVKAKNRKARPSKKEDKEA.

The segment at 92–111 (MEVKAKNRKARPSKKEDKEA) is disordered.

This sequence belongs to the bacterial ribosomal protein bS16 family.

In Rickettsia massiliae (strain Mtu5), this protein is Small ribosomal subunit protein bS16.